Consider the following 893-residue polypeptide: Dolichyl-phosphate-mannose--protein mannosyltransferase 1 (893 aa).

The next 7 helical transmembrane spans lie at Phe-29–Ala-49, Leu-77–Thr-97, Leu-124–Pro-144, Ser-147–Met-167, Tyr-170–Val-190, Ala-224–Gly-244, and Phe-258–Val-278. Residues Phe-310–Glu-364 enclose the MIR 1 domain. Asn-370 carries an N-linked (GlcNAc...) asparagine glycan. MIR domains follow at residues Ile-374–Leu-433 and Asn-443–Asn-499. N-linked (GlcNAc...) asparagine glycosylation is present at Asn-443. Thr-451 bears the Phosphothreonine mark. 3 helical membrane passes run Phe-573–Leu-593, Tyr-610–Leu-630, and Ala-643–Phe-663. The N-linked (GlcNAc...) asparagine glycan is linked to Asn-665. Residues Ala-671–Thr-691 traverse the membrane as a helical segment. Asn-720 is a glycosylation site (N-linked (GlcNAc...) asparagine). The disordered stretch occupies residues Lys-785–Glu-893. A compositionally biased stretch (basic and acidic residues) spans Ala-786 to Ser-806. 2 stretches are compositionally biased toward low complexity: residues Ser-807–Val-823 and Met-854–Glu-864. Residues Val-868–Ser-878 are compositionally biased toward polar residues.

The protein belongs to the glycosyltransferase 39 family.

The protein resides in the endoplasmic reticulum membrane. Its subcellular location is the nucleus membrane. The catalysed reaction is a di-trans,poly-cis-dolichyl beta-D-mannosyl phosphate + L-seryl-[protein] = 3-O-(alpha-D-mannosyl)-L-seryl-[protein] + a di-trans,poly-cis-dolichyl phosphate + H(+). It carries out the reaction a di-trans,poly-cis-dolichyl beta-D-mannosyl phosphate + L-threonyl-[protein] = 3-O-(alpha-D-mannosyl)-L-threonyl-[protein] + a di-trans,poly-cis-dolichyl phosphate + H(+). It functions in the pathway protein modification; protein glycosylation. Its function is as follows. Transfers mannose from Dol-P-mannose to Ser or Thr residues on proteins. Required for normal cell growth and septum formation. Shown to actively O-mannosylate wsc1. The sequence is that of Dolichyl-phosphate-mannose--protein mannosyltransferase 1 (ogm1) from Schizosaccharomyces pombe (strain 972 / ATCC 24843) (Fission yeast).